The primary structure comprises 706 residues: MNNNFNGGNNTGNNFTGNTLSNGICTKKNMKGTLSRTAIFSDGISDDLICCLDPIYNNNDNNNDAICDELGLTPIDNNTICSTDFTPINVMRTDPFRKKSTQELTREWTEWKENSPSLFTPAIVGVVTSFLLQSLKKQATSFLLKTLTDLLFPNNSSLTMEEILRATEQYVQERLDTDTANRVSQELVGLKNNLTTFNDQVEDFLQNRVGISPLAIIDSINTMQQLFVNRLPQFQVSGYQVLLLPLFAQAATLHLTFLRDVIINADEWNIPTAQLNTYTRYFKEYIAEYSNYALSTYDDGFRTRFYPRNTLEDMLQFKTFMTLNALDLVSIWSLLKYVNLYVSTSANLYNIGDNKVNEGAYPISYGPFFNSYIQTKSNYVLSGVSGIGARFTYSTVLGRYLHDDLKNIITTYVGGTQGPNIGVQLSTTELDELKKQQQATRDSLVDFQFFTLNCMLPNPITAPYFATSLYESRYSSIGGYLRKDVFKSEDSTCGLGNPGAWTSYPDYYITNISATVQINGENTDTTPLYFKENRPITSTRGVNKVIAVYNRKANIAGTNQNGTMIHQAPPDGTGFTVSPLHPSANTITSYIKENYGNSGDSLHLKGQGYLHYMLSGNGQDRYRLVLRLSGAANQIKLQSPTTSIYAFDTSTNNEGITDNGSKFKDFAFSTPFVIPEQKEIVLYFEGVGSLDLMNLIFLPADDTPLY.

Belongs to the delta endotoxin family.

Binds to the brush border membrane vesicles of scarab larvae and somehow damages the gut wall to allow the vegetative cells of P.popilliae to enter the hemolymph. Active on M.melolontha. This Paenibacillus popilliae (Bacillus popilliae) protein is Parasporal crystal protein Cry18Aa (cry18Aa).